We begin with the raw amino-acid sequence, 370 residues long: Peptidyl-prolyl cis-trans isomerase D (370 aa).

Ser-5 carries the phosphoserine modification. Positions 19–183 (FFDVDIGGER…KLCVIAECGE (165 aa)) constitute a PPIase cyclophilin-type domain. Residue Lys-171 is modified to N6-acetyllysine. Residues 185–215 (KEGDEWGIFPKDGSGDSHPDFPEDADIDLKD) are chaperone activity. Ser-198 bears the Phosphoserine mark. The interval 214–370 (KDVDKILLIS…EKAVYAKMFA (157 aa)) is interaction with HSP90AB1. TPR repeat units lie at residues 223–256 (SEDL…LDSS), 273–306 (LSCV…DPSN), and 308–340 (KALY…APGD).

Belongs to the cyclophilin-type PPIase family. PPIase D subfamily. Identified in ESR1 or NR3C1/GCR steroid receptor-chaperone complexes. Found in HSP90 chaperone complexes with kinase clients LCK or EIF2AK1. Two monomers associate with one HSP90 homodimer. Interacts with HSP90AA1. Interacts with HSP90AB1; PPID and FKBP4 compete for binding to HSP90AB1 and the interaction is mutually exclusive with the PPID:HSPA8 interaction. Interacts with HSPA8; PPID and STIP1 but not FKBP4 compete for binding to HSPA8 and the interaction is mutually exclusive with the PPID:HSP90AB1 interaction. Interacts with S100A1 and S100A2; the interactions dissociate the PPID:HSP90AA1 interaction. Interacts with S100A6. Interacts with MYB, ILF2, XRCC6, RACK1 and RPS3. Interacts with cytoplasmic dynein 1 intermediate chain (DYNC1I1 or DYNC1I2).

Its subcellular location is the cytoplasm. It is found in the nucleus. The protein resides in the nucleolus. It localises to the nucleoplasm. It catalyses the reaction [protein]-peptidylproline (omega=180) = [protein]-peptidylproline (omega=0). Less sensitive to inhibition by cyclosporin A than is CYP-18. In terms of biological role, PPIase that catalyzes the cis-trans isomerization of proline imidic peptide bonds in oligopeptides and may therefore assist protein folding. Proposed to act as a co-chaperone in HSP90 complexes such as in unligated steroid receptors heterocomplexes. Different co-chaperones seem to compete for association with HSP90 thus establishing distinct HSP90-co-chaperone-receptor complexes with the potential to exert tissue-specific receptor activity control. May have a preference for estrogen receptor complexes and is not found in glucocorticoid receptor complexes. May be involved in cytoplasmic dynein-dependent movement of the receptor from the cytoplasm to the nucleus. May regulate MYB by inhibiting its DNA-binding activity. Involved in regulation of AHR signaling by promoting the formation of the AHR:ARNT dimer; the function is independent of HSP90 but requires the chaperone activity region. Involved in regulation of UV radiation-induced apoptosis. In Rattus norvegicus (Rat), this protein is Peptidyl-prolyl cis-trans isomerase D.